The primary structure comprises 254 residues: Alcohol dehydrogenase (254 aa).

10–33 (FVAGLGGIGLDTSREIVKSGPKNL) provides a ligand contact to NAD(+). S138 serves as a coordination point for substrate. The active-site Proton acceptor is Y151.

It belongs to the short-chain dehydrogenases/reductases (SDR) family. As to quaternary structure, homodimer.

The catalysed reaction is a primary alcohol + NAD(+) = an aldehyde + NADH + H(+). The enzyme catalyses a secondary alcohol + NAD(+) = a ketone + NADH + H(+). This is Alcohol dehydrogenase (Adh) from Drosophila affinidisjuncta (Fruit fly).